Consider the following 71-residue polypeptide: Small ribosomal subunit protein bS21 (71 aa).

The tract at residues 43-71 (TERKRAKASAVKRHAKKLARENARRTRLY) is disordered. Residues 46 to 59 (KRAKASAVKRHAKK) are compositionally biased toward basic residues. Over residues 60-71 (LARENARRTRLY) the composition is skewed to basic and acidic residues.

This sequence belongs to the bacterial ribosomal protein bS21 family.

The sequence is that of Small ribosomal subunit protein bS21 from Pectobacterium atrosepticum (strain SCRI 1043 / ATCC BAA-672) (Erwinia carotovora subsp. atroseptica).